The sequence spans 496 residues: Cobyric acid synthase (496 aa).

Residues 252-442 (DLAVAVIRLP…LHGCFDSDTY (191 aa)) enclose the GATase cobBQ-type domain. Residue cysteine 333 is the Nucleophile of the active site. Histidine 434 is a catalytic residue.

It belongs to the CobB/CobQ family. CobQ subfamily.

It participates in cofactor biosynthesis; adenosylcobalamin biosynthesis. Functionally, catalyzes amidations at positions B, D, E, and G on adenosylcobyrinic A,C-diamide. NH(2) groups are provided by glutamine, and one molecule of ATP is hydrogenolyzed for each amidation. This is Cobyric acid synthase from Desulforudis audaxviator (strain MP104C).